A 485-amino-acid chain; its full sequence is Probable glycine dehydrogenase (decarboxylating) subunit 2 (485 aa).

K273 carries the post-translational modification N6-(pyridoxal phosphate)lysine.

Belongs to the GcvP family. C-terminal subunit subfamily. The glycine cleavage system is composed of four proteins: P, T, L and H. In this organism, the P 'protein' is a heterodimer of two subunits. It depends on pyridoxal 5'-phosphate as a cofactor.

It catalyses the reaction N(6)-[(R)-lipoyl]-L-lysyl-[glycine-cleavage complex H protein] + glycine + H(+) = N(6)-[(R)-S(8)-aminomethyldihydrolipoyl]-L-lysyl-[glycine-cleavage complex H protein] + CO2. Functionally, the glycine cleavage system catalyzes the degradation of glycine. The P protein binds the alpha-amino group of glycine through its pyridoxal phosphate cofactor; CO(2) is released and the remaining methylamine moiety is then transferred to the lipoamide cofactor of the H protein. This chain is Probable glycine dehydrogenase (decarboxylating) subunit 2, found in Caldanaerobacter subterraneus subsp. tengcongensis (strain DSM 15242 / JCM 11007 / NBRC 100824 / MB4) (Thermoanaerobacter tengcongensis).